The chain runs to 445 residues: Ribosomal protein uS12 methylthiotransferase RimO (445 aa).

Residues I4 to K119 enclose the MTTase N-terminal domain. [4Fe-4S] cluster contacts are provided by C13, C48, C82, C156, C160, and C163. The 231-residue stretch at T142 to D372 folds into the Radical SAM core domain. In terms of domain architecture, TRAM spans K375–N441.

This sequence belongs to the methylthiotransferase family. RimO subfamily. Requires [4Fe-4S] cluster as cofactor.

The protein localises to the cytoplasm. The enzyme catalyses L-aspartate(89)-[ribosomal protein uS12]-hydrogen + (sulfur carrier)-SH + AH2 + 2 S-adenosyl-L-methionine = 3-methylsulfanyl-L-aspartate(89)-[ribosomal protein uS12]-hydrogen + (sulfur carrier)-H + 5'-deoxyadenosine + L-methionine + A + S-adenosyl-L-homocysteine + 2 H(+). In terms of biological role, catalyzes the methylthiolation of an aspartic acid residue of ribosomal protein uS12. The sequence is that of Ribosomal protein uS12 methylthiotransferase RimO from Clostridium botulinum (strain Langeland / NCTC 10281 / Type F).